We begin with the raw amino-acid sequence, 198 residues long: Cytochrome c oxidase assembly protein CtaG (198 aa).

Residues 1–12 are Cytoplasmic-facing; that stretch reads MADNGQADRKER. The helical; Signal-anchor for type II membrane protein transmembrane segment at 13–35 threads the bilayer; it reads SNGVIVGTCLAFVAGMIGMAYAA. Residues 36–198 are Periplasmic-facing; it reads VPLYDMFCRV…QVKAKAENKL (163 aa).

It belongs to the COX11/CtaG family.

The protein localises to the cell inner membrane. In terms of biological role, exerts its effect at some terminal stage of cytochrome c oxidase synthesis, probably by being involved in the insertion of the copper B into subunit I. This is Cytochrome c oxidase assembly protein CtaG from Rhizobium meliloti (strain 1021) (Ensifer meliloti).